Consider the following 841-residue polypeptide: DNA ligase (841 aa).

Residues 54–58 (DAEYD), 103–104 (SL), and glutamate 143 contribute to the NAD(+) site. Lysine 145 (N6-AMP-lysine intermediate) is an active-site residue. Positions 166, 203, 321, and 345 each coordinate NAD(+). Zn(2+)-binding residues include cysteine 471, cysteine 474, cysteine 489, and cysteine 495. The segment at 554–575 (KTVAESDQMPSEGSSVGASGKH) is disordered. Polar residues predominate over residues 561–570 (QMPSEGSSVG). The BRCT domain occupies 764 to 841 (GINKAVAGKT…SEAELLTLLG (78 aa)).

This sequence belongs to the NAD-dependent DNA ligase family. LigA subfamily. It depends on Mg(2+) as a cofactor. Requires Mn(2+) as cofactor.

The enzyme catalyses NAD(+) + (deoxyribonucleotide)n-3'-hydroxyl + 5'-phospho-(deoxyribonucleotide)m = (deoxyribonucleotide)n+m + AMP + beta-nicotinamide D-nucleotide.. In terms of biological role, DNA ligase that catalyzes the formation of phosphodiester linkages between 5'-phosphoryl and 3'-hydroxyl groups in double-stranded DNA using NAD as a coenzyme and as the energy source for the reaction. It is essential for DNA replication and repair of damaged DNA. In Neisseria meningitidis serogroup C / serotype 2a (strain ATCC 700532 / DSM 15464 / FAM18), this protein is DNA ligase.